Here is a 331-residue protein sequence, read N- to C-terminus: Ribose-phosphate pyrophosphokinase (331 aa).

55 to 57 (DGE) is an ATP binding site. Mg(2+)-binding residues include His148 and Asp187. Lys211 is an active-site residue. Residues Arg213, Asp237, and 241-245 (DTAGT) each bind D-ribose 5-phosphate.

Belongs to the ribose-phosphate pyrophosphokinase family. Class I subfamily. In terms of assembly, homohexamer. It depends on Mg(2+) as a cofactor.

The protein localises to the cytoplasm. The catalysed reaction is D-ribose 5-phosphate + ATP = 5-phospho-alpha-D-ribose 1-diphosphate + AMP + H(+). It functions in the pathway metabolic intermediate biosynthesis; 5-phospho-alpha-D-ribose 1-diphosphate biosynthesis; 5-phospho-alpha-D-ribose 1-diphosphate from D-ribose 5-phosphate (route I): step 1/1. Its function is as follows. Involved in the biosynthesis of the central metabolite phospho-alpha-D-ribosyl-1-pyrophosphate (PRPP) via the transfer of pyrophosphoryl group from ATP to 1-hydroxyl of ribose-5-phosphate (Rib-5-P). The sequence is that of Ribose-phosphate pyrophosphokinase from Synechococcus elongatus (strain ATCC 33912 / PCC 7942 / FACHB-805) (Anacystis nidulans R2).